A 324-amino-acid chain; its full sequence is Serpentine receptor class delta-30 (324 aa).

The next 7 membrane-spanning stretches (helical) occupy residues 5–25 (IIHS…MYLA), 38–58 (AIIT…FFVM), 83–103 (ACYV…IWMI), 124–144 (VFVA…WFSF), 176–196 (ITLI…YIWI), 227–247 (FQVF…SMFT), and 258–278 (AISV…ILFV). The interval 290–324 (KQPKPHPEMCGPIRSNTRTTSISVTNNSSHLSSAH) is disordered. The span at 303 to 324 (RSNTRTTSISVTNNSSHLSSAH) shows a compositional bias: polar residues.

It belongs to the nematode receptor-like protein srd family.

The protein resides in the membrane. This is Serpentine receptor class delta-30 (srd-30) from Caenorhabditis elegans.